The primary structure comprises 321 residues: GDP-L-fucose synthase (321 aa).

NADP(+) contacts are provided by residues 10 to 16 (GHRGMVG), 36 to 41 (RDELNL), and 105 to 108 (LGSS). Residue Y136 is the Proton donor/acceptor of the active site. NADP(+) is bound by residues K140, 163-166 (PTNL), and H179. Substrate contacts are provided by R187, W202, R209, and D278.

The protein belongs to the NAD(P)-dependent epimerase/dehydratase family. Fucose synthase subfamily. As to quaternary structure, homodimer.

The protein localises to the cytoplasm. The enzyme catalyses GDP-beta-L-fucose + NADP(+) = GDP-4-dehydro-alpha-D-rhamnose + NADPH + H(+). It participates in nucleotide-sugar biosynthesis; GDP-L-fucose biosynthesis via de novo pathway; GDP-L-fucose from GDP-alpha-D-mannose: step 2/2. The protein operates within exopolysaccharide biosynthesis; colanic acid biosynthesis. Its activity is regulated as follows. Subject to product inhibition by NADP and GDP-fucose. Functionally, catalyzes the two-step NADP-dependent conversion of GDP-4-dehydro-6-deoxy-D-mannose to GDP-fucose, involving an epimerase and a reductase reaction. In Escherichia coli (strain K12), this protein is GDP-L-fucose synthase.